We begin with the raw amino-acid sequence, 604 residues long: Beta-(1--&gt;2)glucan export ATP-binding/permease protein NdvA (604 aa).

The ABC transmembrane type-1 domain maps to G21–M311. 6 helical membrane passes run W22–F42, L68–L88, E146–W166, L168–H188, L238–A258, and I285–F305. An ABC transporter domain is found at V345–A579. Position 378-385 (G378–S385) interacts with ATP.

It belongs to the ABC transporter superfamily. Beta-(1--&gt;2)glucan exporter (TC 3.A.1.108.1) family. Homodimer.

It localises to the cell inner membrane. The catalysed reaction is [(1-&gt;2)-beta-D-glucosyl](n)(in) + ATP + H2O = [(1-&gt;2)-beta-D-glucosyl](n)(out) + ADP + phosphate + H(+). Its function is as follows. Involved in beta-(1--&gt;2)glucan export. Transmembrane domains (TMD) form a pore in the inner membrane and the ATP-binding domain (NBD) is responsible for energy generation. The chain is Beta-(1--&gt;2)glucan export ATP-binding/permease protein NdvA from Rhodopseudomonas palustris (strain BisB18).